A 274-amino-acid chain; its full sequence is Large ribosomal subunit protein uL2cz/uL2cy (274 aa).

Disordered stretches follow at residues 1–22 and 223–274; these read MAIH…DSQV and MNPV…RRTK.

Belongs to the universal ribosomal protein uL2 family. Part of the 50S ribosomal subunit.

It is found in the plastid. The protein resides in the chloroplast. The chain is Large ribosomal subunit protein uL2cz/uL2cy (rpl2-A) from Phaseolus vulgaris (Kidney bean).